The following is a 764-amino-acid chain: DNA replication regulator DPB11 (764 aa).

BRCT domains are found at residues 1–99 (MKPF…MTGS), 129–220 (TNIT…PYYL), and 322–418 (NSTL…DLWS). 2 disordered regions span residues 651 to 675 (ETDS…RQMP) and 710 to 764 (TEQP…ELDS). Basic and acidic residues predominate over residues 739–751 (QDKKRTASLEKPM).

Interacts with SLD2.

Its subcellular location is the nucleus. Has a role in the initiation of DNA replication. Required at S-phase checkpoint. Required for the association of PSF1 with origins. Also required for the proper activation of RAD53 in response to DNA damage and replication blocks. Multicopy suppressor of DPB2 mutation. Overexpression restores the growth defect conferred by POL2 mutation. The sequence is that of DNA replication regulator DPB11 (DPB11) from Saccharomyces cerevisiae (strain ATCC 204508 / S288c) (Baker's yeast).